The chain runs to 396 residues: 1-deoxy-D-xylulose 5-phosphate reductoisomerase (396 aa).

Thr-15, Gly-16, Ser-17, Ile-18, Gly-41, and Asn-129 together coordinate NADPH. Lys-130 contributes to the 1-deoxy-D-xylulose 5-phosphate binding site. Glu-131 lines the NADPH pocket. Asp-155 provides a ligand contact to Mn(2+). 1-deoxy-D-xylulose 5-phosphate-binding residues include Ser-156, Glu-157, Ser-182, and His-205. Residue Glu-157 participates in Mn(2+) binding. Gly-211 contacts NADPH. 1-deoxy-D-xylulose 5-phosphate is bound by residues Ser-218, Asn-223, Lys-224, and Glu-227. Residue Glu-227 participates in Mn(2+) binding.

The protein belongs to the DXR family. It depends on Mg(2+) as a cofactor. Mn(2+) is required as a cofactor.

It carries out the reaction 2-C-methyl-D-erythritol 4-phosphate + NADP(+) = 1-deoxy-D-xylulose 5-phosphate + NADPH + H(+). Its pathway is isoprenoid biosynthesis; isopentenyl diphosphate biosynthesis via DXP pathway; isopentenyl diphosphate from 1-deoxy-D-xylulose 5-phosphate: step 1/6. Functionally, catalyzes the NADPH-dependent rearrangement and reduction of 1-deoxy-D-xylulose-5-phosphate (DXP) to 2-C-methyl-D-erythritol 4-phosphate (MEP). The polypeptide is 1-deoxy-D-xylulose 5-phosphate reductoisomerase (Xanthomonas axonopodis pv. citri (strain 306)).